The following is a 202-amino-acid chain: Nitrophorin-3 (202 aa).

An N-terminal signal peptide occupies residues 1–23 (MEPYSALLAVTILCLTSTMGVSG). Cystine bridges form between C25/C144 and C62/C193. A heme-binding site is contributed by H80.

The protein belongs to the calycin superfamily. Nitrophorin family. As to quaternary structure, interacts weakly with host coagulation factor IX (F9) (inactive and activated) in the presence of Ca(2+). Salivary gland (at protein level).

Its subcellular location is the secreted. Its function is as follows. Heme-based protein that deliver nitric oxide gas (NO) to the victim while feeding, resulting in vasodilation and inhibition of platelet aggregation. Reversibly binds nitric oxide (NO). Also binds tightly to histamine, which is released by the host to induce wound healing. Exhibits weak anticoagulant activity. This is Nitrophorin-3 from Rhodnius prolixus (Triatomid bug).